The chain runs to 202 residues: Prephenate decarboxylase (202 aa).

This sequence belongs to the prephenate decarboxylase family.

It catalyses the reaction prephenate + H(+) = 3-[(4R)-4-hydroxycyclohexa-1,5-dien-1-yl]-2-oxopropanoate + CO2. In vivo, involved in the biosynthesis of 2-carboxy-6-hydroxyoctahydroindole (Choi) present in the nonribosomal glycopeptides aeruginoside 126A and B. AerD is an unusual prephenate decarboxylase that avoids the typical aromatization of the cyclohexadienol ring of prephenate. AerD catalyzes the protonation at C8 followed by decarboxylation to produce the dihydro-4-hydroxyphenylpyruvate regioisomer A258 (H2HPP A258)(3-(4-hydroxycyclohexa- 1,5-dienyl)-2-oxopropanoic acid), which is able to undergo a nonenzymatic isomerization to produce dihydro-4-hydroxyphenylpyruvate regioisomer A295 (H2HPP A295)(3-(4-hydroxycyclohex-2-enylidene)-2-oxopropanoic acid). The chain is Prephenate decarboxylase from Planktothrix agardhii (strain NIVA-CYA 126/8).